Consider the following 185-residue polypeptide: Large ribosomal subunit protein uL5 (185 aa).

This sequence belongs to the universal ribosomal protein uL5 family. In terms of assembly, part of the 50S ribosomal subunit; part of the 5S rRNA/L5/L18/L25 subcomplex. Contacts the 5S rRNA and the P site tRNA. Forms a bridge to the 30S subunit in the 70S ribosome.

This is one of the proteins that bind and probably mediate the attachment of the 5S RNA into the large ribosomal subunit, where it forms part of the central protuberance. In the 70S ribosome it contacts protein S13 of the 30S subunit (bridge B1b), connecting the 2 subunits; this bridge is implicated in subunit movement. Contacts the P site tRNA; the 5S rRNA and some of its associated proteins might help stabilize positioning of ribosome-bound tRNAs. The protein is Large ribosomal subunit protein uL5 of Streptomyces griseus subsp. griseus (strain JCM 4626 / CBS 651.72 / NBRC 13350 / KCC S-0626 / ISP 5235).